We begin with the raw amino-acid sequence, 183 residues long: Probable GTP-binding protein EngB (183 aa).

One can recognise an EngB-type G domain in the interval 17–183; that stretch reads DYPEVVFVGR…KKELLSRILN (167 aa). Residues 25–32, 51–55, 69–72, 137–140, and 166–168 each bind GTP; these read GRSNVGKS, GRTRA, DVPG, TKID, and SSA. Residues Ser32 and Thr53 each contribute to the Mg(2+) site.

It belongs to the TRAFAC class TrmE-Era-EngA-EngB-Septin-like GTPase superfamily. EngB GTPase family. The cofactor is Mg(2+).

Its function is as follows. Necessary for normal cell division and for the maintenance of normal septation. In Aquifex aeolicus (strain VF5), this protein is Probable GTP-binding protein EngB.